Reading from the N-terminus, the 59-residue chain is Large ribosomal subunit protein uL30 (59 aa).

Belongs to the universal ribosomal protein uL30 family. As to quaternary structure, part of the 50S ribosomal subunit.

The chain is Large ribosomal subunit protein uL30 from Bacillus licheniformis (strain ATCC 14580 / DSM 13 / JCM 2505 / CCUG 7422 / NBRC 12200 / NCIMB 9375 / NCTC 10341 / NRRL NRS-1264 / Gibson 46).